Consider the following 166-residue polypeptide: Vasopressin-neurophysin 2-copeptin (166 aa).

An N-terminal signal peptide occupies residues 1-19; it reads MPDATLPACFLSLLAFTSA. A disulfide bridge links C20 with C25. Position 28 is a glycine amide (G28). 7 disulfide bridges follow: C41-C85, C44-C58, C52-C75, C59-C65, C92-C104, C98-C116, and C105-C110. Residue N133 is glycosylated (N-linked (GlcNAc...) asparagine).

The protein belongs to the vasopressin/oxytocin family. In terms of assembly, interacts with vasopressin receptors V1bR/AVPR1B (Ki=85 pM), V1aR/AVPR1A (Ki=0.6 nM) and V2R/AVPR2 (Ki=4.9 nM). Interacts with oxytocin receptor (OXTR) (Ki=110 nM).

It localises to the secreted. Neurophysin 2 specifically binds vasopressin. Its function is as follows. Vasopressin has a direct antidiuretic action on the kidney, it also causes vasoconstriction of the peripheral vessels. Acts by binding to vasopressin receptors (V1bR/AVPR1B, V1aR/AVPR1A, and V2R/AVPR2). The protein is Vasopressin-neurophysin 2-copeptin (AVP) of Bos taurus (Bovine).